Reading from the N-terminus, the 153-residue chain is UPF0251 protein CT0950 (153 aa).

It belongs to the UPF0251 family.

The protein is UPF0251 protein CT0950 of Chlorobaculum tepidum (strain ATCC 49652 / DSM 12025 / NBRC 103806 / TLS) (Chlorobium tepidum).